The chain runs to 208 residues: Translation initiation factor 6 (208 aa).

Belongs to the eIF-6 family.

Binds to the 50S ribosomal subunit and prevents its association with the 30S ribosomal subunit to form the 70S initiation complex. This is Translation initiation factor 6 (eif6) from Nanoarchaeum equitans (strain Kin4-M).